The chain runs to 132 residues: L-ectoine synthase (132 aa).

Belongs to the ectoine synthase family.

It carries out the reaction (2S)-4-acetamido-2-aminobutanoate = L-ectoine + H2O. Its pathway is amine and polyamine biosynthesis; ectoine biosynthesis; L-ectoine from L-aspartate 4-semialdehyde: step 3/3. In terms of biological role, catalyzes the circularization of gamma-N-acetyl-alpha,gamma-diaminobutyric acid (ADABA) to ectoine (1,4,5,6-tetrahydro-2-methyl-4-pyrimidine carboxylic acid), which is an excellent osmoprotectant. This chain is L-ectoine synthase, found in Rhodococcus erythropolis (strain PR4 / NBRC 100887).